The sequence spans 354 residues: uncharacterized protein (354 aa).

Disordered stretches follow at residues 1-74 (MGTK…ENCR) and 87-115 (SESGVCTEPEERGQGGKKSQFLPINQRAS). Position 19 is an N6-acetyllysine (K19). The segment covering 32-41 (EGPSSNSSFH) has biased composition (low complexity). A compositionally biased stretch (acidic residues) spans 45–54 (EEGTDLEGDM). Phosphoserine is present on residues S115 and S174. The segment covering 182–199 (QGSSQDLPMQANLSQSNE) has biased composition (polar residues). Disordered regions lie at residues 182–208 (QGSSQDLPMQANLSQSNEGPLLAGRDR) and 235–298 (QVAD…DELS). Y291 is modified (phosphotyrosine). A Phosphoserine modification is found at S292.

This is an uncharacterized protein from Mus musculus (Mouse).